A 249-amino-acid polypeptide reads, in one-letter code: Ribitol 2-dehydrogenase (249 aa).

20 to 43 (TGAASGIGLECARTLLGAGAKVVL) is a binding site for NAD(+). Residue Tyr160 is the Proton acceptor of the active site.

Belongs to the short-chain dehydrogenases/reductases (SDR) family. As to quaternary structure, homotetramer.

It catalyses the reaction ribitol + NAD(+) = D-ribulose + NADH + H(+). This chain is Ribitol 2-dehydrogenase (rbtD), found in Klebsiella aerogenes (Enterobacter aerogenes).